The primary structure comprises 438 residues: Transposon Ty2-F Gag polyprotein (438 aa).

Polar residues-rich tracts occupy residues 1–11, 19–39, and 49–60; these read MESQQLHQNPH, ASVTSKEVPSNQDPLAVSASN, and KVNSQQETTPGT. 3 disordered regions span residues 1 to 86, 366 to 397, and 419 to 438; these read MESQ…GQYQ, VSRTSPNTTNTKVTTRNYHRTNSSKPRAAKAH, and SSQYLSDDNELSLRPATERI. The segment at 295–397 is RNA-binding; the sequence is ENNINVSDRL…SSKPRAAKAH (103 aa). The span at 369 to 381 shows a compositional bias: low complexity; it reads TSPNTTNTKVTTR.

In terms of assembly, homotrimer.

It is found in the cytoplasm. Functionally, capsid protein (CA) is the structural component of the virus-like particle (VLP), forming the shell that encapsulates the retrotransposons dimeric RNA genome. The particles are assembled from trimer-clustered units and there are holes in the capsid shells that allow for the diffusion of macromolecules. CA also has nucleocapsid-like chaperone activity, promoting primer tRNA(i)-Met annealing to the multipartite primer-binding site (PBS), dimerization of Ty2 RNA and initiation of reverse transcription. The protein is Transposon Ty2-F Gag polyprotein (TY2A-F) of Saccharomyces cerevisiae (strain ATCC 204508 / S288c) (Baker's yeast).